The following is an 87-amino-acid chain: Small polypeptide DEVIL 11 (87 aa).

Residues 1–11 (MASSSSLTRSG) are compositionally biased toward polar residues. The tract at residues 1 to 47 (MASSSSLTRSGSVHLDEKWKLSKKDGGASRITRSSSTSSSSFNGKKQ) is disordered. A compositionally biased stretch (basic and acidic residues) spans 14 to 27 (HLDEKWKLSKKDGG). The segment covering 29-41 (SRITRSSSTSSSS) has biased composition (low complexity). Positions 51–82 (AFTRKCARLVKEQRARFYIMRRCVIMLICWRD) are required for DVL/RTFL small polypeptide activity. A helical transmembrane segment spans residues 64–80 (RARFYIMRRCVIMLICW). Asn-83 is a glycosylation site (N-linked (GlcNAc...) asparagine).

The protein belongs to the DVL/RTFL small polypeptides family.

It localises to the cell membrane. Its function is as follows. Small polypeptide acting as a regulatory molecule which coordinates cellular responses required for differentiation, growth and development, probably by restricting polar cell proliferation in lateral organs and coordinating socket cell recruitment and differentiation at trichome sites. The sequence is that of Small polypeptide DEVIL 11 from Arabidopsis thaliana (Mouse-ear cress).